A 487-amino-acid chain; its full sequence is Histamine H1 receptor (487 aa).

Residues 1 to 29 are Extracellular-facing; it reads MSLPNSSCLLEDKMCEGNKTTMASPQLMP. Asn5 and Asn18 each carry an N-linked (GlcNAc...) asparagine glycan. The helical transmembrane segment at 30 to 50 threads the bilayer; that stretch reads LVVVLSTICLVTVGLNLLVLY. Residues 51-64 lie on the Cytoplasmic side of the membrane; that stretch reads AVRSERKLHTVGNL. Residues 65–89 form a helical membrane-spanning segment; sequence YIVSLSVADLIVGAVVMPMNILYLL. At 90–97 the chain is on the extracellular side; the sequence is MSKWSLGR. A helical membrane pass occupies residues 98 to 123; it reads PLCLFWLSMDYVASTASIFSVFILCI. A disulfide bridge connects residues Cys100 and Cys180. Residues Asp107 and Thr112 each contribute to the histamine site. Positions 107 to 112 are important for agonist binding; that stretch reads DYVAST. At 124–144 the chain is on the cytoplasmic side; it reads DRYRSVQQPLRYLKYRTKTRA. 2 positions are modified to phosphothreonine: Thr140 and Thr142. Residues 145–164 traverse the membrane as a helical segment; that stretch reads SATILGAWFLSFLWVIPILG. Topologically, residues 165–188 are extracellular; it reads WNHFMQQTSVRREDKCETDFYDVT. A helical membrane pass occupies residues 189–211; it reads WFKVMTAIINFYLPTLLMLWFYA. Asn198 is a histamine binding site. The Cytoplasmic portion of the chain corresponds to 212-416; it reads KIYKAVRQHC…MNRERKAAKQ (205 aa). Ser230 bears the Phosphoserine mark. The segment covering 238–261 has biased composition (basic and acidic residues); it reads KLRPENPKGDAKKPGKESPWEVLK. The segment at 238 to 292 is disordered; it reads KLRPENPKGDAKKPGKESPWEVLKRKPKDAGGGSVLKSPSQTXKEMKSPVVFSQE. Thr279 bears the Phosphothreonine mark. Phosphoserine occurs at positions 344 and 347. The segment at 345–379 is disordered; sequence EISEDQMLGDSQSFSRTDSDTTTETAPGKGKLRSG. Positions 353–369 are enriched in polar residues; the sequence is GDSQSFSRTDSDTTTET. A phosphoserine mark is found at Ser380, Ser396, and Ser398. Residues 417–440 traverse the membrane as a helical segment; the sequence is LGFIMAAFILCWIPYFIFFMVIAF. An important for agonist binding region spans residues 424–428; that stretch reads FILCW. Tyr431 provides a ligand contact to histamine. A disulfide bond links Cys441 and Cys444. Over 441–446 the chain is Extracellular; it reads CKNCCN. The chain crosses the membrane as a helical span at residues 447–469; sequence EHLHMFTIWLGYINSTLNPLIYP. Residues 470-487 lie on the Cytoplasmic side of the membrane; sequence LCNENFKKTFKRILHIRS.

It belongs to the G-protein coupled receptor 1 family. Phosphorylation at sites in the second and third cytoplasmic loops independently contribute to agonist-induced receptor down-regulation.

The protein resides in the cell membrane. In terms of biological role, G-protein-coupled receptor for histamine, a biogenic amine that functions as an immune modulator and a neurotransmitter. Through the H1 receptor, histamine mediates the contraction of smooth muscles and increases capillary permeability due to contraction of terminal venules. Also mediates neurotransmission in the central nervous system and thereby regulates circadian rhythms, emotional and locomotor activities as well as cognitive functions. This is Histamine H1 receptor from Pan troglodytes (Chimpanzee).